The sequence spans 250 residues: Coproheme decarboxylase (250 aa).

Residues Arg131, 145–149 (YPMNK), His172, and Gln185 each bind Fe-coproporphyrin III. Tyr145 is an active-site residue.

The protein belongs to the ChdC family. Type 1 subfamily. It depends on Fe-coproporphyrin III as a cofactor.

The catalysed reaction is Fe-coproporphyrin III + 2 H2O2 + 2 H(+) = heme b + 2 CO2 + 4 H2O. It catalyses the reaction Fe-coproporphyrin III + H2O2 + H(+) = harderoheme III + CO2 + 2 H2O. It carries out the reaction harderoheme III + H2O2 + H(+) = heme b + CO2 + 2 H2O. It participates in porphyrin-containing compound metabolism; protoheme biosynthesis. Functionally, involved in coproporphyrin-dependent heme b biosynthesis. Catalyzes the decarboxylation of Fe-coproporphyrin III (coproheme) to heme b (protoheme IX), the last step of the pathway. The reaction occurs in a stepwise manner with a three-propionate intermediate. This is Coproheme decarboxylase from Staphylococcus aureus (strain MRSA252).